Reading from the N-terminus, the 227-residue chain is MIVTQIAGKIQVIFGPMFSGKTTELIRRIKRFNFANKKCLLIKYSKDTRYNDNIDKSFLVTHDKQNYQAFPCSILEDVKEQAQNYDVIGIDEGQFFPDVVQFSEDLANQGKTVIIAALDGTFQRKPFQSVIDLVSKAEYITKLTAVCMVCYNEAAFSKRIVESDDIELIGGIDKYISVCRGCYNSDQNEGNSTKPSKTARHSHSQSAPSVAPLAVNINPDDHLNNDY.

Residues 15–22 (GPMFSGKT), 47–49 (DTR), and 91–94 (DEGQ) contribute to the ATP site. Catalysis depends on E92, which acts as the Proton acceptor. Residue F122 coordinates substrate. Positions 147 and 150 each coordinate Zn(2+). Substrate-binding positions include 166-170 (IELIG) and Y175. Zn(2+) contacts are provided by C179 and C182. Positions 187–196 (QNEGNSTKPS) are enriched in polar residues. Residues 187–227 (QNEGNSTKPSKTARHSHSQSAPSVAPLAVNINPDDHLNNDY) are disordered.

This sequence belongs to the thymidine kinase family. In terms of assembly, interacts with calmodulin in the presence of Ca(2+).

It catalyses the reaction thymidine + ATP = dTMP + ADP + H(+). The chain is Thymidine kinase 1 from Dictyostelium discoideum (Social amoeba).